The primary structure comprises 597 residues: MFPVAPKPQDSSQASDRLMTEKQQEEAEWESINVLLMMHGLKPLSLVKRTDLKDLIIFDKQSSQRMRQNLKLLVEETSRQQNMIQELIETNQQLRNELQLEQSRAANQEQRANDLEQIMESVKSKIGELEDESLNRACQQQNKIKDLQKEQKTLQVKCQHYKKKRTEQQETIASLQMEVCRLRKEEEDRIVTQNRVFAYLCKRVPHTVLDRQLLCLIDYYESKIRKIHTQRQYKEDESQSEEENDYRNLDASPTYKGLLMSLQNQLKESKSKIDALLSEKLNLQKDLETRPTQHELRLYKQQVKKLEKALKKNIKLQELISHKKAEDTEKKDEPSKYNQQQALIDQRYFQVLCSINSIIHNPRAPVIIYKQSKGGAQNFNKDLVQDCGFEHLVPVIEMWADQLTSLKDLYKSLKTLSAELVPWHNLKKQDENEGIKVEDLLFIVDTMLEEVENKEKDSNMPNFQTLQAIVSHFQKLFDVPSLNGVYPRMNEVYTRLGEMNNAVRNLQELLELDSSSSLCVLVSTVGKLCRLINEDVNEQVMQVLGPEDLQSIIYKLEEHEEFFPAFQAFTNDLLEILEIDDLDAIVPAVKKLKVLSY.

The tract at residues 1–23 is disordered; the sequence is MFPVAPKPQDSSQASDRLMTEKQ. Coiled-coil stretches lie at residues 66–179 and 254–326; these read MRQN…QMEV and TYKG…KKAE. The TPR repeat unit spans residues 483–516; it reads NGVYPRMNEVYTRLGEMNNAVRNLQELLELDSSS.

In terms of assembly, directly interacts with tubulin-gamma; this interaction determines centrosomal localization.

The protein localises to the cytoplasm. It localises to the cytoskeleton. Its subcellular location is the microtubule organizing center. The protein resides in the centrosome. Its function is as follows. Plays a role in the organization of both preexisting and nascent microtubules in interphase cells. During mitosis, required for the organization and orientation of the mitotic spindle. This Pongo abelii (Sumatran orangutan) protein is Centrosomal protein of 70 kDa (CEP70).